A 359-amino-acid chain; its full sequence is Dihydroorotate dehydrogenase (quinone) (359 aa).

Residues 65–69 (AGLDK) and Thr-89 each bind FMN. A substrate-binding site is contributed by Lys-69. Residue 114–118 (NRLGF) participates in substrate binding. Positions 149 and 182 each coordinate FMN. Asn-182 contacts substrate. Ser-185 (nucleophile) is an active-site residue. Asn-187 lines the substrate pocket. Positions 233 and 261 each coordinate FMN. Residue 262 to 263 (NT) coordinates substrate. Residues Gly-284, Gly-313, and 334-335 (YT) contribute to the FMN site.

It belongs to the dihydroorotate dehydrogenase family. Type 2 subfamily. As to quaternary structure, monomer. Requires FMN as cofactor.

The protein localises to the cell membrane. It carries out the reaction (S)-dihydroorotate + a quinone = orotate + a quinol. It functions in the pathway pyrimidine metabolism; UMP biosynthesis via de novo pathway; orotate from (S)-dihydroorotate (quinone route): step 1/1. Its function is as follows. Catalyzes the conversion of dihydroorotate to orotate with quinone as electron acceptor. The polypeptide is Dihydroorotate dehydrogenase (quinone) (Paracidovorax citrulli (strain AAC00-1) (Acidovorax citrulli)).